The sequence spans 995 residues: Zinc finger protein ZFPM1 (995 aa).

Residues 1–14 show a composition bias toward basic residues; sequence MSRRKQSNPRQIKR. The interval 1-103 is disordered; it reads MSRRKQSNPR…EAAMASPWSG (103 aa). Residues 15-36 show a composition bias toward basic and acidic residues; that stretch reads SLRDMEAGEEAKAMDSSPKEQE. Composition is skewed to acidic residues over residues 67–78 and 86–95; these read SPEDPEDMEGQE and EEKEEKEEEA. Phosphoserine is present on residues Ser-99 and Ser-143. Residues 249 to 282 form a CCHC FOG-type 1 zinc finger; it reads VINKDVFPCKDCGIWYRSERNLQAHLLYYCASRQ. 4 residues coordinate Zn(2+): Cys-257, Cys-260, His-273, and Cys-278. Residue Ser-286 is modified to Phosphoserine. C2H2-type zinc fingers lie at residues 303 to 327, 333 to 355, and 361 to 384; these read RVCP…MRSH, FVCL…LKVH, and GVCH…VTNH. The interaction with TACC3 stretch occupies residues 343 to 354; sequence TTKANCERHLKV. Phosphoserine occurs at positions 397, 497, and 500. The tract at residues 424 to 526 is disordered; that stretch reads PLVPADKAPT…SSPGPGELTM (103 aa). Residues 509-525 show a composition bias toward low complexity; it reads ELSSPTPGSSPGPGELT. The CCHC FOG-type 2 zinc-finger motif lies at 584–617; that stretch reads FSGTKGATCFECEITFNNINNFYVHKRLYCSGRR. Residues Cys-592, Cys-595, His-608, and Cys-613 each contribute to the Zn(2+) site. Residues 616–694 form a disordered region; sequence RRAPEDPPTV…SVDDAEDDPS (79 aa). A compositionally biased stretch (low complexity) spans 630 to 652; the sequence is AATGPARAPAGAAAEPDPSRSSP. A phosphoserine mark is found at Ser-651 and Ser-684. A CCHC FOG-type 3 zinc finger spans residues 690–723; sequence EDDPSRTLCEACNIRFSRHETYTVHKRYYCASRH. Zn(2+) contacts are provided by Cys-698, Cys-701, His-714, and Cys-719. The interval 721 to 827 is disordered; it reads SRHDPPPRRP…PRRQSPDAPT (107 aa). Pro residues-rich tracts occupy residues 728 to 740 and 764 to 779; these read RRPP…PGPA and GAPP…PVVP. The span at 785–800 shows a compositional bias: low complexity; sequence LPSSPRPGSASAGPAP. Residue Ser-803 is modified to Phosphoserine. The interaction with CTBP2 stretch occupies residues 811 to 817; that stretch reads PIDLSKR. Ser-822 bears the Phosphoserine mark. The segment at 830 to 863 adopts a CCHC FOG-type 4 zinc-finger fold; the sequence is PALADYHECTACRVSFHSLEAYLAHKKYSCPAAP. Cys-838, Cys-841, His-854, and Cys-859 together coordinate Zn(2+). The C2H2-type 4 zinc finger occupies 868 to 891; that stretch reads ALCPYCPPNGRVRGDLVEHLRQAH. The disordered stretch occupies residues 892–960; the sequence is GLQVAKPAAS…APAPAPGGGG (69 aa). Residues 908–922 show a composition bias toward basic and acidic residues; sequence TPAERAPRDSPDGRA. Residues Ser-925 and Ser-927 each carry the phosphoserine modification. The CCHC FOG-type 5 zinc finger occupies 957-990; the sequence is GGGGGHRYCRLCNIRFSSLSTFIAHKKYYCSSHA. Zn(2+) is bound by residues Cys-965, Cys-968, His-981, and Cys-986.

Belongs to the FOG (Friend of GATA) family. In terms of assembly, interacts with the N-terminal zinc-finger of GATA1, GATA2 and GATA3. Interacts with corepressor CTBP2; this interaction is however not essential for corepressor activity in erythropoiesis. Interacts with TACC3. As to expression, mainly expressed in hematopoietic tissues. Expressed in the spleen, a primary site of hematopoiesis in the adult mouse, as well as in the liver and testis, but not in the heart, brain, lung, kidney, or skeletal muscle. Among hematopoietic cell lines, it is strongly expressed in erythroid and megakaryocytic cell lines. Expressed at low level in several lymphoid and early myeloid cell lines. Not expressed in mast cell and macrophage lines. Expressed in the heart, where it colocalizes with GATA4, GATA5 and GATA6.

It localises to the nucleus. Transcription regulator that plays an essential role in erythroid and megakaryocytic cell differentiation. Essential cofactor that acts via the formation of a heterodimer with transcription factors of the GATA family GATA1, GATA2 and GATA3. Such heterodimer can both activate or repress transcriptional activity, depending on the cell and promoter context. The heterodimer formed with GATA proteins is essential to activate expression of genes such as NFE2, ITGA2B, alpha- and beta-globin, while it represses expression of KLF1. May be involved in regulation of some genes in gonads. May also be involved in cardiac development, in a non-redundant way with ZFPM2/FOG2. In Mus musculus (Mouse), this protein is Zinc finger protein ZFPM1 (Zfpm1).